Reading from the N-terminus, the 324-residue chain is Glycerol-3-phosphate dehydrogenase [NAD(P)+] (324 aa).

Residues S10, F11, R31, and K106 each coordinate NADPH. Residues K106, G134, and S136 each coordinate sn-glycerol 3-phosphate. A138 contacts NADPH. K189, D244, S254, R255, and N256 together coordinate sn-glycerol 3-phosphate. K189 acts as the Proton acceptor in catalysis. R255 is a binding site for NADPH. NADPH contacts are provided by I279 and E281.

This sequence belongs to the NAD-dependent glycerol-3-phosphate dehydrogenase family.

The protein resides in the cytoplasm. It catalyses the reaction sn-glycerol 3-phosphate + NAD(+) = dihydroxyacetone phosphate + NADH + H(+). It carries out the reaction sn-glycerol 3-phosphate + NADP(+) = dihydroxyacetone phosphate + NADPH + H(+). It participates in membrane lipid metabolism; glycerophospholipid metabolism. In terms of biological role, catalyzes the reduction of the glycolytic intermediate dihydroxyacetone phosphate (DHAP) to sn-glycerol 3-phosphate (G3P), the key precursor for phospholipid synthesis. The sequence is that of Glycerol-3-phosphate dehydrogenase [NAD(P)+] from Ehrlichia canis (strain Jake).